A 222-amino-acid polypeptide reads, in one-letter code: MERIEGVAVGRCAASPYLVPLTLHYRQNGAQKSWDFMKTHDSVTILMFNSSRRSLVLVKQFRPAVYAGEVERLFPGSLAAAEQDRPQALQAALPGSAGVTYELCAGLLDQPGLSLEEVACKEAWEECGYRLAPSDLRRVTSYKSGVGLTGSSQTMFYAEVTDAQRGSPGGGLAEEGELIEVVHLPLDGARTFADDPDVPKTLGVIFGISWFFSCVAPGLGLQ.

A Nudix hydrolase domain is found at 38 to 206 (KTHDSVTILM…DVPKTLGVIF (169 aa)). Residues 111–129 (PGLSLEEVACKEAWEECGY) carry the Nudix box motif.

Belongs to the Nudix hydrolase family. In terms of assembly, homodimer. Mg(2+) is required as a cofactor.

It is found in the cytoplasm. The enzyme catalyses UDP-sugar + H2O = UMP + alpha-D-aldose 1-phosphate.. In terms of biological role, hydrolyzes UDP-glucose to glucose 1-phosphate and UMP and ADP-ribose to ribose 5-phosphate and AMP. The physiological substrate is probably UDP-glucose. Poor activity on other substrates such as ADP-glucose, CDP-glucose, GDP-glucose and GDP-mannose. The polypeptide is Uridine diphosphate glucose pyrophosphatase NUDT14 (NUDT14) (Bos taurus (Bovine)).